A 262-amino-acid chain; its full sequence is Taurine import ATP-binding protein TauB (262 aa).

Residues 4–233 (LELERISAQY…RYAAGESARA (230 aa)) enclose the ABC transporter domain. 38–45 (GPSGSGKT) is a binding site for ATP.

This sequence belongs to the ABC transporter superfamily. Taurine importer (TC 3.A.1.17.1) family. The complex is composed of two ATP-binding proteins (TauB), two transmembrane proteins (TauC) and a solute-binding protein (TauA).

It localises to the cell inner membrane. It carries out the reaction taurine(out) + ATP + H2O = taurine(in) + ADP + phosphate + H(+). Part of the ABC transporter complex TauABC involved in taurine import. Responsible for energy coupling to the transport system. The protein is Taurine import ATP-binding protein TauB of Pseudomonas putida (strain ATCC 47054 / DSM 6125 / CFBP 8728 / NCIMB 11950 / KT2440).